Here is a 138-residue protein sequence, read N- to C-terminus: Outer membrane protein assembly factor BamE (138 aa).

The first 42 residues, methionine 1–leucine 42, serve as a signal peptide directing secretion.

It belongs to the BamE family. In terms of assembly, part of the Bam complex.

It localises to the cell outer membrane. Part of the outer membrane protein assembly complex, which is involved in assembly and insertion of beta-barrel proteins into the outer membrane. The sequence is that of Outer membrane protein assembly factor BamE from Psychrobacter arcticus (strain DSM 17307 / VKM B-2377 / 273-4).